A 308-amino-acid polypeptide reads, in one-letter code: MDDFLSISLLSVAMLVGCYVAGIIPLAVNFSEERLKLVTVLGAGLLCGTALAVIVPEGVHALYEEVLEGKHHQTSEMKQNGIASDKAAEISSVHEHEHSHDHTQLHAYIGVSLVLGFVFMLLVDQIGSSHVHSSDDPETARPSSSKITTTLGLVVHAAADGVALGAAASTSQTSVQLIVFVAIMLHKAPAAFGLVSFLMHAGLERNRIRKHLLVFALAAPAMSMLTYLGLSKSSKEALSEVNATGVAMLFSAGTFLYVATVHVLPEVGGMGHSHKPDTTGGRGLSRLEVAALVLGCLIPLILSIGHQH.

A helical membrane pass occupies residues phenylalanine 4–isoleucine 24. A glycan (N-linked (GlcNAc...) asparagine) is linked at asparagine 29. 5 helical membrane-spanning segments follow: residues leucine 35 to valine 55, alanine 107 to glycine 127, isoleucine 147 to alanine 167, leucine 177 to phenylalanine 197, and histidine 211 to serine 231. An N-linked (GlcNAc...) asparagine glycan is attached at asparagine 242. Helical transmembrane passes span glycine 245–proline 265 and leucine 287–glutamine 307.

This sequence belongs to the ZIP transporter (TC 2.A.5) family.

The protein resides in the golgi apparatus. The protein localises to the trans-Golgi network membrane. It is found in the cell membrane. It localises to the cytoplasm. Its subcellular location is the perinuclear region. The protein resides in the mitochondrion. The protein localises to the nucleus. It carries out the reaction Zn(2+)(in) = Zn(2+)(out). In terms of biological role, transports zinc ions across cell and organelle membranes into the cytoplasm and regulates intracellular zinc homeostasis. Participates in the zinc ions efflux out of the secretory compartments. Regulates intracellular zinc level, resulting in the enhancement of AKT1 and MAPK3/MAPK1 (Erk1/2) phosphorylation in response to the BCR activation. Also functions as a membrane androgen receptor that mediates, through a G protein, the non-classical androgen signaling pathway, characterized by the activation of MAPK3/MAPK1 (Erk1/2) and transcription factors CREB1 or ATF1. This pathway contributes to CLDN1 and CLDN5 expression and tight junction formation between adjacent Sertoli cells. Mediates androgen-induced vascular endothelial cell proliferation through activation of an inhibitory G protein leading to the AKT1 and MAPK3/MAPK1 (Erk1/2) activation which in turn modulate inhibition (phosphorylation) of GSK3B and CCND1 transcription. Moreover, has dual functions as a membrane-bound androgen receptor and as an androgen-dependent zinc transporter both of which are mediated through an inhibitory G protein (Gi) that mediates both MAP kinase and zinc signaling leading to the androgen-dependent apoptotic process. The polypeptide is Zinc transporter ZIP9 (Mus musculus (Mouse)).